We begin with the raw amino-acid sequence, 236 residues long: Probable 2-phosphosulfolactate phosphatase (236 aa).

Belongs to the ComB family. Mg(2+) serves as cofactor.

The enzyme catalyses (2R)-O-phospho-3-sulfolactate + H2O = (2R)-3-sulfolactate + phosphate. This Gloeobacter violaceus (strain ATCC 29082 / PCC 7421) protein is Probable 2-phosphosulfolactate phosphatase.